The sequence spans 317 residues: Egg-laying defective protein 26 (317 aa).

Positions 156-277 constitute an LRAT domain; that stretch reads EVNVSGVKFY…CSTGVPFSYD (122 aa). Residues H166 and H178 contribute to the active site. The active-site Acyl-thioester intermediate is C261.

Highly expressed in the cells of the spermatheca, the mouth, and the lining of the pharynx, the rectum, and the excretory canal. Also expressed in the pharyngeal intestinal junction cell.

The protein resides in the apical cell membrane. In terms of biological role, putative acyltransferase. Plays a role in the morphogenesis of a vulval toroid cell, vulF, which is located where the vulva and the uterus connect. Not required for specifying vulval cell fate. In Caenorhabditis elegans, this protein is Egg-laying defective protein 26.